The chain runs to 250 residues: Adenosylcobinamide-GDP ribazoletransferase (250 aa).

Helical transmembrane passes span 33–53 (IASY…LLYI), 63–83 (IVMT…HIDG), 109–129 (LGTN…LFLT), 137–157 (LTAL…SMMI), 180–200 (FAIA…LAVF), and 203–223 (ILTI…LRIG).

It belongs to the CobS family. Mg(2+) is required as a cofactor.

It is found in the cell membrane. It catalyses the reaction alpha-ribazole + adenosylcob(III)inamide-GDP = adenosylcob(III)alamin + GMP + H(+). It carries out the reaction alpha-ribazole 5'-phosphate + adenosylcob(III)inamide-GDP = adenosylcob(III)alamin 5'-phosphate + GMP + H(+). The protein operates within cofactor biosynthesis; adenosylcobalamin biosynthesis; adenosylcobalamin from cob(II)yrinate a,c-diamide: step 7/7. Its function is as follows. Joins adenosylcobinamide-GDP and alpha-ribazole to generate adenosylcobalamin (Ado-cobalamin). Also synthesizes adenosylcobalamin 5'-phosphate from adenosylcobinamide-GDP and alpha-ribazole 5'-phosphate. The protein is Adenosylcobinamide-GDP ribazoletransferase of Thermoanaerobacter pseudethanolicus (strain ATCC 33223 / 39E) (Clostridium thermohydrosulfuricum).